Consider the following 368-residue polypeptide: Aspartate-semialdehyde dehydrogenase (368 aa).

NADP(+) is bound by residues 10–13 (RGMV), 37–38 (TS), and glutamine 74. A phosphate-binding site is contributed by arginine 103. The active-site Acyl-thioester intermediate is the cysteine 136. Cysteine 136 is modified (S-cysteinyl cysteine; in inhibited form). Glutamine 163 contacts substrate. NADP(+)-binding positions include 166–167 (SG) and proline 194. Glutamate 242 contacts substrate. Lysine 245 lines the phosphate pocket. Arginine 268 is a substrate binding site. Histidine 275 functions as the Proton acceptor in the catalytic mechanism. Glutamine 351 lines the NADP(+) pocket.

This sequence belongs to the aspartate-semialdehyde dehydrogenase family. As to quaternary structure, homodimer.

It carries out the reaction L-aspartate 4-semialdehyde + phosphate + NADP(+) = 4-phospho-L-aspartate + NADPH + H(+). It participates in amino-acid biosynthesis; L-lysine biosynthesis via DAP pathway; (S)-tetrahydrodipicolinate from L-aspartate: step 2/4. Its pathway is amino-acid biosynthesis; L-methionine biosynthesis via de novo pathway; L-homoserine from L-aspartate: step 2/3. The protein operates within amino-acid biosynthesis; L-threonine biosynthesis; L-threonine from L-aspartate: step 2/5. Functionally, catalyzes the NADPH-dependent formation of L-aspartate-semialdehyde (L-ASA) by the reductive dephosphorylation of L-aspartyl-4-phosphate. The sequence is that of Aspartate-semialdehyde dehydrogenase from Salmonella typhi.